The following is a 158-amino-acid chain: GTP-dependent dephospho-CoA kinase (158 aa).

GTP is bound by residues D35, V36, D54, K56, E109, and D132.

The protein belongs to the GTP-dependent DPCK family.

The enzyme catalyses 3'-dephospho-CoA + GTP = GDP + CoA + H(+). The protein operates within cofactor biosynthesis; coenzyme A biosynthesis. In terms of biological role, catalyzes the GTP-dependent phosphorylation of the 3'-hydroxyl group of dephosphocoenzyme A to form coenzyme A (CoA). This Methanococcus maripaludis (strain C5 / ATCC BAA-1333) protein is GTP-dependent dephospho-CoA kinase.